The chain runs to 127 residues: Glycine cleavage system H protein (127 aa).

The region spanning 22–104 is the Lipoyl-binding domain; the sequence is AVVIGITHFA…YEGAWMVKVE (83 aa). Position 63 is an N6-lipoyllysine (lysine 63).

It belongs to the GcvH family. The glycine cleavage system is composed of four proteins: P, T, L and H. It depends on (R)-lipoate as a cofactor.

The glycine cleavage system catalyzes the degradation of glycine. The H protein shuttles the methylamine group of glycine from the P protein to the T protein. In terms of biological role, is also involved in protein lipoylation via its role as an octanoyl/lipoyl carrier protein intermediate. The polypeptide is Glycine cleavage system H protein (Bacillus mycoides (strain KBAB4) (Bacillus weihenstephanensis)).